The chain runs to 360 residues: DNA polymerase IV (360 aa).

Residues Ile-9–Gly-191 enclose the UmuC domain. Mg(2+) is bound by residues Asp-13 and Asp-108. Residue Glu-109 is part of the active site.

Belongs to the DNA polymerase type-Y family. In terms of assembly, monomer. It depends on Mg(2+) as a cofactor.

The protein resides in the cytoplasm. The enzyme catalyses DNA(n) + a 2'-deoxyribonucleoside 5'-triphosphate = DNA(n+1) + diphosphate. Poorly processive, error-prone DNA polymerase involved in untargeted mutagenesis. Copies undamaged DNA at stalled replication forks, which arise in vivo from mismatched or misaligned primer ends. These misaligned primers can be extended by PolIV. Exhibits no 3'-5' exonuclease (proofreading) activity. May be involved in translesional synthesis, in conjunction with the beta clamp from PolIII. In Ureaplasma parvum serovar 3 (strain ATCC 27815 / 27 / NCTC 11736), this protein is DNA polymerase IV.